A 603-amino-acid polypeptide reads, in one-letter code: Protein SHORT-ROOT 2 (603 aa).

2 disordered regions span residues 11–58 and 106–140; these read HHHH…HSHS and DFSS…SSAG. Residues 31–44 show a composition bias toward low complexity; it reads SYPSSRGSTSSPSS. Basic residues predominate over residues 45–58; the sequence is HHTHNHTYYHHSHS. A compositionally biased stretch (low complexity) spans 108–125; the sequence is SSSSSSRQFHSGTGAPSS. A GRAS domain is found at 179–602; the sequence is AAPSSSGRWA…QPVVWASAWK (424 aa). The tract at residues 186–249 is leucine repeat I (LRI); it reads RWAAQLLMEC…LTTSGPRTLR (64 aa). Positions 268–354 are VHIID; it reads ALKFQELSPW…DTPHLSITTV (87 aa). Positions 318–322 match the VHIID motif; that stretch reads LHILD. The segment at 370-406 is leucine repeat II (LRII); that stretch reads EIGQRLEKFARLMGVPFSFRAVHHAGDLADLDLAALD. Positions 416–514 are PFYRE; the sequence is LAVNCVNALR…ERAVGRAIVD (99 aa). Residues 517–602 form an SAW region; it reads SCPASQSAER…QPVVWASAWK (86 aa).

This sequence belongs to the GRAS family. As to quaternary structure, does not interact with SCR1.

It localises to the nucleus. In terms of biological role, putative transcription factor involved in asymmetric cell division. In Oryza sativa subsp. indica (Rice), this protein is Protein SHORT-ROOT 2 (SHR2).